The chain runs to 125 residues: Small ribosomal subunit protein uS13 (125 aa).

It belongs to the universal ribosomal protein uS13 family. As to quaternary structure, part of the 30S ribosomal subunit. Forms a loose heterodimer with protein S19. Forms two bridges to the 50S subunit in the 70S ribosome.

Functionally, located at the top of the head of the 30S subunit, it contacts several helices of the 16S rRNA. In the 70S ribosome it contacts the 23S rRNA (bridge B1a) and protein L5 of the 50S subunit (bridge B1b), connecting the 2 subunits; these bridges are implicated in subunit movement. Contacts the tRNAs in the A and P-sites. This chain is Small ribosomal subunit protein uS13, found in Granulibacter bethesdensis (strain ATCC BAA-1260 / CGDNIH1).